The following is a 412-amino-acid chain: Gamma-glutamyl phosphate reductase (412 aa).

The protein belongs to the gamma-glutamyl phosphate reductase family.

The protein localises to the cytoplasm. It carries out the reaction L-glutamate 5-semialdehyde + phosphate + NADP(+) = L-glutamyl 5-phosphate + NADPH + H(+). It functions in the pathway amino-acid biosynthesis; L-proline biosynthesis; L-glutamate 5-semialdehyde from L-glutamate: step 2/2. Its function is as follows. Catalyzes the NADPH-dependent reduction of L-glutamate 5-phosphate into L-glutamate 5-semialdehyde and phosphate. The product spontaneously undergoes cyclization to form 1-pyrroline-5-carboxylate. The protein is Gamma-glutamyl phosphate reductase of Streptococcus suis (strain 98HAH33).